The chain runs to 423 residues: CinA-like protein (423 aa).

This sequence belongs to the CinA family.

This Desulforapulum autotrophicum (strain ATCC 43914 / DSM 3382 / VKM B-1955 / HRM2) (Desulfobacterium autotrophicum) protein is CinA-like protein.